A 407-amino-acid polypeptide reads, in one-letter code: uncharacterized protein (407 aa).

Residues 1–290 lie on the Lumenal side of the membrane; it reads MPLNIIGTAL…SNSLRRVISN (290 aa). Aspartate 114, lysine 236, and serine 281 together coordinate NADP(+). The Lowers pKa of active site Tyr role is filled by lysine 236. A helical membrane pass occupies residues 291–311; the sequence is GSVVLLIILYCILLYPILWLF. The Cytoplasmic portion of the chain corresponds to 312 to 407; that stretch reads TKSGRRGDQS…KSQNKSRKDD (96 aa). The stretch at 361 to 390 forms a coiled coil; that stretch reads ELQKKLFDNTERDILQLEKKVAAKRNANKT. The tract at residues 383 to 407 is disordered; it reads AKRNANKTGNQNSKKKSQNKSRKDD. A compositionally biased stretch (basic residues) spans 395 to 407; the sequence is SKKKSQNKSRKDD.

This sequence belongs to the short-chain dehydrogenases/reductases (SDR) family.

It is found in the endoplasmic reticulum membrane. Its function is as follows. May be involved in lipid metabolism. This is an uncharacterized protein from Saccharomyces cerevisiae (strain ATCC 204508 / S288c) (Baker's yeast).